An 894-amino-acid chain; its full sequence is Microsomal triglyceride transfer protein large subunit (894 aa).

A signal peptide spans 1–18; it reads MILLAVLFLCFISSYSAS. Residues 28 to 662 enclose the Vitellogenin domain; it reads LNNDRLYKLK…YVGKTPLHAI (635 aa). A disulfide bond links Cys174 and Cys194.

Heterodimer; heterodimerizes with the protein disulfide isomerase (P4HB/PDI). Interacts with APOB. Interacts with PRAP1.

Its subcellular location is the endoplasmic reticulum. The protein localises to the golgi apparatus. It catalyses the reaction a 1,2-diacyl-sn-glycero-3-phosphocholine(in) = a 1,2-diacyl-sn-glycero-3-phosphocholine(out). It carries out the reaction a 1,2-diacyl-sn-glycero-3-phosphoethanolamine(in) = a 1,2-diacyl-sn-glycero-3-phosphoethanolamine(out). The catalysed reaction is a cholesterol ester(in) = a cholesterol ester(out). The enzyme catalyses a triacyl-sn-glycerol(in) = a triacyl-sn-glycerol(out). Catalyzes the transport of triglyceride, cholesteryl ester, and phospholipid between phospholipid surfaces. Required for the assembly and secretion of plasma lipoproteins that contain apolipoprotein B. May be involved in regulating cholesteryl ester biosynthesis in cells that produce lipoproteins. This Sus scrofa (Pig) protein is Microsomal triglyceride transfer protein large subunit (MTTP).